A 107-amino-acid chain; its full sequence is MLALLYIPAALAEITGCFSFWAWIRLHKSPLWLLPGIASLLLFAWLLTFSPAENAGKAYAVYGGIYIIMSLLWSWKVEATPPDHWDLIGAAFCLVGAAIILWMPRSL.

4 consecutive transmembrane segments (helical) span residues 4–24 (LLYI…WAWI), 29–49 (SPLW…LLTF), 55–75 (AGKA…LWSW), and 84–104 (HWDL…LWMP).

The protein belongs to the UPF0060 family.

It localises to the cell inner membrane. The chain is UPF0060 membrane protein ZMO1566 from Zymomonas mobilis subsp. mobilis (strain ATCC 31821 / ZM4 / CP4).